A 204-amino-acid polypeptide reads, in one-letter code: Large ribosomal subunit protein bL25 (204 aa).

This sequence belongs to the bacterial ribosomal protein bL25 family. CTC subfamily. Part of the 50S ribosomal subunit; part of the 5S rRNA/L5/L18/L25 subcomplex. Contacts the 5S rRNA. Binds to the 5S rRNA independently of L5 and L18.

Functionally, this is one of the proteins that binds to the 5S RNA in the ribosome where it forms part of the central protuberance. This Pseudoalteromonas translucida (strain TAC 125) protein is Large ribosomal subunit protein bL25.